The chain runs to 1003 residues: Spheroidin (1003 aa).

Ser-2 carries the post-translational modification N-acetylserine; by host. Positions Asp-953–Glu-970 are enriched in low complexity. The interval Asp-953–Cys-979 is disordered.

As to quaternary structure, may form disulfide-bond-linked aggregates.

Functionally, major component of viral occlusion bodies, the protective complexes in which the virions are embedded in the cytoplasm of their insect hosts. The sequence is that of Spheroidin from Amsacta (AmEPV).